Consider the following 225-residue polypeptide: Uridylate kinase (225 aa).

Residue 9–10 (GS) participates in ATP binding. UMP is bound at residue G44. Residues G45 and R49 each contribute to the ATP site. UMP is bound by residues D66 and 114–120 (THPGHTT). ATP-binding residues include T140, N141, Y146, and D149.

The protein belongs to the UMP kinase family. Homohexamer.

The protein localises to the cytoplasm. The enzyme catalyses UMP + ATP = UDP + ADP. It participates in pyrimidine metabolism; CTP biosynthesis via de novo pathway; UDP from UMP (UMPK route): step 1/1. Inhibited by UTP. Functionally, catalyzes the reversible phosphorylation of UMP to UDP. This is Uridylate kinase from Thermococcus kodakarensis (strain ATCC BAA-918 / JCM 12380 / KOD1) (Pyrococcus kodakaraensis (strain KOD1)).